Reading from the N-terminus, the 309-residue chain is Sulfate adenylyltransferase subunit 2 (309 aa).

Belongs to the PAPS reductase family. CysD subfamily. In terms of assembly, heterodimer composed of CysD, the smaller subunit, and CysN.

The enzyme catalyses sulfate + ATP + H(+) = adenosine 5'-phosphosulfate + diphosphate. It functions in the pathway sulfur metabolism; hydrogen sulfide biosynthesis; sulfite from sulfate: step 1/3. Its function is as follows. With CysN forms the ATP sulfurylase (ATPS) that catalyzes the adenylation of sulfate producing adenosine 5'-phosphosulfate (APS) and diphosphate, the first enzymatic step in sulfur assimilation pathway. APS synthesis involves the formation of a high-energy phosphoric-sulfuric acid anhydride bond driven by GTP hydrolysis by CysN coupled to ATP hydrolysis by CysD. This chain is Sulfate adenylyltransferase subunit 2, found in Methylorubrum populi (strain ATCC BAA-705 / NCIMB 13946 / BJ001) (Methylobacterium populi).